Here is a 251-residue protein sequence, read N- to C-terminus: Hydroxyacylglutathione hydrolase (251 aa).

Histidine 53, histidine 55, aspartate 57, histidine 58, histidine 110, aspartate 127, and histidine 165 together coordinate Zn(2+).

It belongs to the metallo-beta-lactamase superfamily. Glyoxalase II family. As to quaternary structure, monomer. It depends on Zn(2+) as a cofactor.

It carries out the reaction an S-(2-hydroxyacyl)glutathione + H2O = a 2-hydroxy carboxylate + glutathione + H(+). It participates in secondary metabolite metabolism; methylglyoxal degradation; (R)-lactate from methylglyoxal: step 2/2. Thiolesterase that catalyzes the hydrolysis of S-D-lactoyl-glutathione to form glutathione and D-lactic acid. In Salmonella paratyphi C (strain RKS4594), this protein is Hydroxyacylglutathione hydrolase.